The sequence spans 429 residues: Glucose-6-phosphate isomerase (429 aa).

Residue Glu-282 is the Proton donor of the active site. Residues His-303 and Lys-418 contribute to the active site.

The protein belongs to the GPI family.

It localises to the cytoplasm. The enzyme catalyses alpha-D-glucose 6-phosphate = beta-D-fructose 6-phosphate. It participates in carbohydrate biosynthesis; gluconeogenesis. The protein operates within carbohydrate degradation; glycolysis; D-glyceraldehyde 3-phosphate and glycerone phosphate from D-glucose: step 2/4. Its function is as follows. Catalyzes the reversible isomerization of glucose-6-phosphate to fructose-6-phosphate. This chain is Glucose-6-phosphate isomerase, found in Mesomycoplasma hyopneumoniae (strain 232) (Mycoplasma hyopneumoniae).